The following is an 896-amino-acid chain: Alanine--tRNA ligase (896 aa).

Zn(2+)-binding residues include histidine 580, histidine 584, cysteine 683, and histidine 687.

The protein belongs to the class-II aminoacyl-tRNA synthetase family. Requires Zn(2+) as cofactor.

It localises to the cytoplasm. The enzyme catalyses tRNA(Ala) + L-alanine + ATP = L-alanyl-tRNA(Ala) + AMP + diphosphate. Functionally, catalyzes the attachment of alanine to tRNA(Ala) in a two-step reaction: alanine is first activated by ATP to form Ala-AMP and then transferred to the acceptor end of tRNA(Ala). Also edits incorrectly charged Ser-tRNA(Ala) and Gly-tRNA(Ala) via its editing domain. The chain is Alanine--tRNA ligase from Mycolicibacterium smegmatis (strain ATCC 700084 / mc(2)155) (Mycobacterium smegmatis).